The chain runs to 615 residues: 1-deoxy-D-xylulose-5-phosphate synthase (615 aa).

Residues histidine 72 and 111-113 contribute to the thiamine diphosphate site; that span reads GHS. Aspartate 142 is a binding site for Mg(2+). Residues 143-144, asparagine 171, tyrosine 278, and glutamate 360 each bind thiamine diphosphate; that span reads GA. Asparagine 171 contributes to the Mg(2+) binding site.

It belongs to the transketolase family. DXPS subfamily. In terms of assembly, homodimer. The cofactor is Mg(2+). Thiamine diphosphate serves as cofactor.

It catalyses the reaction D-glyceraldehyde 3-phosphate + pyruvate + H(+) = 1-deoxy-D-xylulose 5-phosphate + CO2. It functions in the pathway metabolic intermediate biosynthesis; 1-deoxy-D-xylulose 5-phosphate biosynthesis; 1-deoxy-D-xylulose 5-phosphate from D-glyceraldehyde 3-phosphate and pyruvate: step 1/1. Catalyzes the acyloin condensation reaction between C atoms 2 and 3 of pyruvate and glyceraldehyde 3-phosphate to yield 1-deoxy-D-xylulose-5-phosphate (DXP). This is 1-deoxy-D-xylulose-5-phosphate synthase from Campylobacter jejuni subsp. doylei (strain ATCC BAA-1458 / RM4099 / 269.97).